The primary structure comprises 552 residues: 3-hydroxy-3-methylglutaryl-coenzyme A reductase 1 (552 aa).

Low complexity-rich tracts occupy residues 79 to 99 (QHNQQQQQKQQPSQDYIQQPQ) and 112 to 122 (QQQQQQQQQQQ). The segment at 79–138 (QHNQQQQQKQQPSQDYIQQPQNDNNINSGKEQEQQQQQQQQQQQTPDITNQPTKTNKKIP) is disordered. A compositionally biased stretch (polar residues) spans 123 to 132 (TPDITNQPTK). E237 acts as the Charge relay system in catalysis. N288 is a glycosylation site (N-linked (GlcNAc...) asparagine). K369 (charge relay system) is an active-site residue. N375 is a glycosylation site (N-linked (GlcNAc...) asparagine). D445 acts as the Charge relay system in catalysis. H543 acts as the Proton donor in catalysis.

It belongs to the HMG-CoA reductase family.

Its subcellular location is the endoplasmic reticulum membrane. It catalyses the reaction (R)-mevalonate + 2 NADP(+) + CoA = (3S)-3-hydroxy-3-methylglutaryl-CoA + 2 NADPH + 2 H(+). It functions in the pathway metabolic intermediate biosynthesis; (R)-mevalonate biosynthesis; (R)-mevalonate from acetyl-CoA: step 3/3. Its function is as follows. This transmembrane glycoprotein is involved in the control of cholesterol biosynthesis. It is the rate-limiting enzyme of the sterol biosynthesis. In Dictyostelium discoideum (Social amoeba), this protein is 3-hydroxy-3-methylglutaryl-coenzyme A reductase 1 (hmgA).